Here is a 326-residue protein sequence, read N- to C-terminus: Nitrogen metabolite regulation-like protein bik4 (326 aa).

NADP(+) contacts are provided by residues Gly-13–Val-18 and Phe-161–Asn-164.

It belongs to the NmrA-type oxidoreductase family.

In terms of biological role, nitrogen metabolite regulation-like protein involved in the regulation of the gene cluster that mediates the biosynthesis of bikaverin, a red pigment also considered as a mycotoxin. This is Nitrogen metabolite regulation-like protein bik4 from Gibberella fujikuroi (strain CBS 195.34 / IMI 58289 / NRRL A-6831) (Bakanae and foot rot disease fungus).